The sequence spans 275 residues: 3',5'-cyclic adenosine monophosphate phosphodiesterase CpdA (275 aa).

The Fe cation site is built by aspartate 22, histidine 24, aspartate 64, asparagine 94, histidine 164, histidine 203, and histidine 205. Residues histidine 24, aspartate 64, and 94 to 95 contribute to the AMP site; that span reads NH. An AMP-binding site is contributed by histidine 205.

Belongs to the cyclic nucleotide phosphodiesterase class-III family. Requires Fe(2+) as cofactor.

The enzyme catalyses 3',5'-cyclic AMP + H2O = AMP + H(+). Functionally, hydrolyzes cAMP to 5'-AMP. Plays an important regulatory role in modulating the intracellular concentration of cAMP, thereby influencing cAMP-dependent processes. This Escherichia coli O157:H7 protein is 3',5'-cyclic adenosine monophosphate phosphodiesterase CpdA.